Consider the following 287-residue polypeptide: tRNA uridine(34) hydroxylase (287 aa).

The region spanning 132–226 (EGRPVVMLDT…YFEEVGGAHY (95 aa)) is the Rhodanese domain. Catalysis depends on cysteine 186, which acts as the Cysteine persulfide intermediate.

The protein belongs to the TrhO family.

The catalysed reaction is uridine(34) in tRNA + AH2 + O2 = 5-hydroxyuridine(34) in tRNA + A + H2O. In terms of biological role, catalyzes oxygen-dependent 5-hydroxyuridine (ho5U) modification at position 34 in tRNAs. The chain is tRNA uridine(34) hydroxylase from Paraburkholderia xenovorans (strain LB400).